The chain runs to 1100 residues: cGMP-inhibited 3',5'-cyclic phosphodiesterase 3B (1100 aa).

Residues 1–11 (MRKDERERDAP) are compositionally biased toward basic and acidic residues. Residues 1 to 28 (MRKDERERDAPAMRSPPPPPASAASPPE) form an interaction with RAPGEF3 region. Residues 1–29 (MRKDERERDAPAMRSPPPPPASAASPPES) form a disordered region. At S15 the chain carries Phosphoserine. 6 helical membrane passes run 69–89 (AGAR…LLGA), 110–130 (LSLS…CFLT), 140–160 (AGSW…FAAW), 170–190 (PAAA…TLAP), 198–218 (VLVL…LGAL), and 225–245 (LLSC…DHFF). Phosphoserine; by PKB/AKT1 or PKB/AKT2 is present on S273. 2 positions are modified to phosphoserine: S274 and S421. Disordered stretches follow at residues 400 to 423 (RKLH…SSGA) and 570 to 590 (EPDG…SVFS). Positions 408-423 (GRTSFPTPQLRRSSGA) are enriched in polar residues. Residues 415-439 (PQLRRSSGASSLLTNEHCSRWDRSS) are interaction with PIK3R6. The span at 573–583 (GTDHPSEKSGE) shows a compositional bias: basic and acidic residues. A PDEase domain is found at 627-1061 (PNIDQEVSLD…KIWKEIIEEE (435 aa)). H713 serves as the catalytic Proton donor. H713 contacts AMP. Positions 717, 797, 798, and 913 each coordinate Mg(2+). The AMP site is built by D798, D913, and Q964. A compositionally biased stretch (acidic residues) spans 993-1024 (EEGDDTESDDDDDDDDGDGGEELDSDDEETED). The segment at 993-1033 (EEGDDTESDDDDDDDDGDGGEELDSDDEETEDNLNPKPQRR) is disordered. A coiled-coil region spans residues 1044-1079 (MHHLTENHKIWKEIIEEEEEKCKAEGNKLQVDNASL).

Belongs to the cyclic nucleotide phosphodiesterase family. PDE3 subfamily. As to quaternary structure, homodimer. Interacts with PIK3CG; regulates PDE3B activity and thereby cAMP levels in cells. Interacts with RAPGEF3 and PIK3R6; form a signaling complex that regulates phosphatidylinositol 3-kinase gamma in angiogenesis. Interacts with ABHD15; this interaction regulates PDE3B's stability and expression and, thereby, impacts the antilipolytic action of insulin. Mg(2+) serves as cofactor. The cofactor is Mn(2+). In terms of processing, phosphorylation at Ser-273 mediates insulin-induced activation of PDE3B. Abundant in adipose tissues.

The protein localises to the membrane. The catalysed reaction is a nucleoside 3',5'-cyclic phosphate + H2O = a nucleoside 5'-phosphate + H(+). It carries out the reaction 3',5'-cyclic AMP + H2O = AMP + H(+). It catalyses the reaction 3',5'-cyclic GMP + H2O = GMP + H(+). Its activity is regulated as follows. Inhibited by cGMP. In terms of biological role, cyclic nucleotide phosphodiesterase with a dual-specificity for the second messengers cAMP and cGMP, which are key regulators of many important physiological processes. Regulates angiogenesis by inhibiting the cAMP-dependent guanine nucleotide exchange factor RAPGEF3 and downstream phosphatidylinositol 3-kinase gamma-mediated signaling. Controls cardiac contractility by reducing cAMP concentration in cardiocytes. This is cGMP-inhibited 3',5'-cyclic phosphodiesterase 3B from Mus musculus (Mouse).